The chain runs to 254 residues: NAD-dependent protein deacylase (254 aa).

Residues 1-250 form the Deacetylase sirtuin-type domain; that stretch reads MERLEEARKR…LPPSPEDQAE (250 aa). 22–41 contributes to the NAD(+) binding site; sequence GAGISKPSGIPTFRDAEGLW. 2 residues coordinate substrate: tyrosine 66 and arginine 69. NAD(+) is bound at residue 104-107; sequence QNVD. Histidine 122 acts as the Proton acceptor in catalysis. Cysteine 130, cysteine 133, cysteine 149, and cysteine 152 together coordinate Zn(2+). Residues 189–191, 215–217, and alanine 233 each bind NAD(+); these read GTS and NPE.

This sequence belongs to the sirtuin family. Class III subfamily. Zn(2+) is required as a cofactor.

The protein resides in the cytoplasm. The enzyme catalyses N(6)-acetyl-L-lysyl-[protein] + NAD(+) + H2O = 2''-O-acetyl-ADP-D-ribose + nicotinamide + L-lysyl-[protein]. The catalysed reaction is N(6)-succinyl-L-lysyl-[protein] + NAD(+) + H2O = 2''-O-succinyl-ADP-D-ribose + nicotinamide + L-lysyl-[protein]. Its function is as follows. NAD-dependent lysine deacetylase and desuccinylase that specifically removes acetyl and succinyl groups on target proteins. Modulates the activities of several proteins which are inactive in their acylated form. The sequence is that of NAD-dependent protein deacylase from Thermus thermophilus (strain ATCC BAA-163 / DSM 7039 / HB27).